Reading from the N-terminus, the 75-residue chain is Notewaprin-b (75 aa).

Residues 1 to 24 form the signal peptide; that stretch reads MSSGGLLLLLGLLTLWAELTPVSS. Positions 27-72 constitute a WAP domain; sequence RPKKPGLCPPRPQKPPCVRECKNDWICPGEQKCCRYGCIYECRDPI. 4 disulfides stabilise this stretch: C34–C60, C43–C64, C47–C59, and C53–C68.

This sequence belongs to the venom waprin family. Expressed by the venom gland.

Its subcellular location is the secreted. Damages membranes of susceptible bacteria. Has no hemolytic activity. Not toxic to mice. Does not inhibit the proteinases elastase and cathepsin G. The sequence is that of Notewaprin-b from Notechis scutatus scutatus (Mainland tiger snake).